The following is a 305-amino-acid chain: MIFQQTLGNKATFSGIGLHTGKTITLTLRPAEAGTGIVFHRVDLSPAVSIEAHASNVVNTRLSTTIGRGDASVSTIEHLMAALYGCGIDNAHVDIDGPEVPIMDGSAAPFVAAIAKAGVKMSGKARKYLVVKKPVTVVDGDKKATIIPSRHYKISFDMQFAHPAVKSQFRSLEFSQESFIGDFAAARTFGFLAEVEMMKSHGLALGGSLENAVVIGDNGVINPEGLRFQDEFVRHKILDSVGDLSLAGHRLIGHVKATKSGHDLNHKLVTELLKRPDCYTLIEFTPQAFNAPFNIGIPELSWLEA.

Residues H78, H235, and D239 each contribute to the Zn(2+) site. Residue H262 is the Proton donor of the active site.

The protein belongs to the LpxC family. The cofactor is Zn(2+).

It carries out the reaction a UDP-3-O-[(3R)-3-hydroxyacyl]-N-acetyl-alpha-D-glucosamine + H2O = a UDP-3-O-[(3R)-3-hydroxyacyl]-alpha-D-glucosamine + acetate. Its pathway is glycolipid biosynthesis; lipid IV(A) biosynthesis; lipid IV(A) from (3R)-3-hydroxytetradecanoyl-[acyl-carrier-protein] and UDP-N-acetyl-alpha-D-glucosamine: step 2/6. Catalyzes the hydrolysis of UDP-3-O-myristoyl-N-acetylglucosamine to form UDP-3-O-myristoylglucosamine and acetate, the committed step in lipid A biosynthesis. The polypeptide is UDP-3-O-acyl-N-acetylglucosamine deacetylase (Geobacter sp. (strain M21)).